We begin with the raw amino-acid sequence, 374 residues long: Flap endonuclease 1 (374 aa).

The segment at 1–105 (MGVKGLNKLI…GELEKRLLRR (105 aa)) is N-domain. D34 is a Mg(2+) binding site. DNA contacts are provided by R47 and R71. Mg(2+)-binding residues include D87, E159, E161, D180, and D182. An I-domain region spans residues 123 to 254 (DHLKFEKRLV…VTAYKLIKEH (132 aa)). DNA is bound at residue E159. Residues G232 and D234 each contribute to the DNA site. D234 contacts Mg(2+). The segment at 339-347 (VQGRLDSFF) is interaction with PCNA. The interval 353–374 (DDGKDKKRKSTAKDTKSKKQKK) is disordered.

The protein belongs to the XPG/RAD2 endonuclease family. FEN1 subfamily. As to quaternary structure, interacts with PCNA. Three molecules of RAD27 bind to one PCNA trimer with each molecule binding to one PCNA monomer. PCNA stimulates the nuclease activity without altering cleavage specificity. Mg(2+) serves as cofactor. In terms of processing, phosphorylated. Phosphorylation upon DNA damage induces relocalization to the nuclear plasma.

Its subcellular location is the nucleus. It localises to the nucleolus. It is found in the nucleoplasm. The protein resides in the mitochondrion. In terms of biological role, structure-specific nuclease with 5'-flap endonuclease and 5'-3' exonuclease activities involved in DNA replication and repair. During DNA replication, cleaves the 5'-overhanging flap structure that is generated by displacement synthesis when DNA polymerase encounters the 5'-end of a downstream Okazaki fragment. It enters the flap from the 5'-end and then tracks to cleave the flap base, leaving a nick for ligation. Also involved in the long patch base excision repair (LP-BER) pathway, by cleaving within the apurinic/apyrimidinic (AP) site-terminated flap. Acts as a genome stabilization factor that prevents flaps from equilibrating into structures that lead to duplications and deletions. Also possesses 5'-3' exonuclease activity on nicked or gapped double-stranded DNA, and exhibits RNase H activity. Also involved in replication and repair of rDNA and in repairing mitochondrial DNA. The polypeptide is Flap endonuclease 1 (Candida tropicalis (strain ATCC MYA-3404 / T1) (Yeast)).